Reading from the N-terminus, the 591-residue chain is Serine/threonine-protein kinase PAK 4 (591 aa).

One can recognise a CRIB domain in the interval 11–24; sequence ISAPSNFEHRVHTG. Positions 25-320 are linker; that stretch reads FDQHEQKFTG…VVDPGDPRSY (296 aa). Residue Ser41 is modified to Phosphoserine. Lys78 bears the N6-methyllysine mark. Positions 95 to 301 are disordered; sequence TRSNSLRRDS…PQREPQRVSH (207 aa). Residues Ser104 and Ser148 each carry the phosphoserine modification. Basic and acidic residues predominate over residues 149 to 164; sequence GDRRRAGPEKRPKSSR. Residues Ser167 and Ser181 each carry the phosphoserine modification. A Phosphothreonine modification is found at Thr187. Over residues 191-202 the composition is skewed to low complexity; the sequence is AGLASGAKLAAG. Residue Ser195 is modified to Phosphoserine. Phosphothreonine is present on Thr207. Positions 242–260 are enriched in low complexity; the sequence is SSSSSSRPPTRARGAPSPG. Phosphoserine is present on residues Ser258 and Ser267. Residues 271–290 are compositionally biased toward pro residues; that stretch reads LAPPACTPAAPAVPGPPGPR. Ser291 bears the Phosphoserine mark. Residues 292 to 301 are compositionally biased toward basic and acidic residues; the sequence is PQREPQRVSH. The interval 298-323 is GEF-interaction domain (GID); the sequence is RVSHEQFRAALQLVVDPGDPRSYLDN. Residues 321–572 enclose the Protein kinase domain; sequence LDNFIKIGEG…AAELLKHPFL (252 aa). ATP is bound by residues 327–335, Lys350, and 396–398; these read IGEGSTGIV and EFL. The active-site Proton acceptor is Asp440. Residue 458–460 participates in ATP binding; it reads DFG. Ser474 carries the phosphoserine; by autocatalysis modification.

Belongs to the protein kinase superfamily. STE Ser/Thr protein kinase family. STE20 subfamily. In terms of assembly, interacts with FGFR2 and GRB2. Interacts tightly with GTP-bound but not GDP-bound CDC42/p21 and weakly with RAC1. Interacts with INKA1. Interacts with SH3RF2. Interacts with RHOU and PAXI; the PAK4-RHOU complex protects RHOU from ubiquitination and acts as a scaffold to suppport paxillin/PAXI phosphorylation. In terms of processing, autophosphorylated on serine residues when activated by CDC42/p21. Phosphorylated on tyrosine residues upon stimulation of FGFR2. Methylated by SETD6. Polyubiquitinated, leading to its proteasomal degradation. In terms of tissue distribution, highest expression in prostate, testis and colon.

The protein resides in the cytoplasm. The enzyme catalyses L-seryl-[protein] + ATP = O-phospho-L-seryl-[protein] + ADP + H(+). It catalyses the reaction L-threonyl-[protein] + ATP = O-phospho-L-threonyl-[protein] + ADP + H(+). Inhibited by INKA1; which inhibits the serine/threonine-protein kinase activity by binding PAK4 in a substrate-like manner. Its function is as follows. Serine/threonine-protein kinase that plays a role in a variety of different signaling pathways including cytoskeleton regulation, cell adhesion turnover, cell migration, growth, proliferation or cell survival. Activation by various effectors including growth factor receptors or active CDC42 and RAC1 results in a conformational change and a subsequent autophosphorylation on several serine and/or threonine residues. Phosphorylates and inactivates the protein phosphatase SSH1, leading to increased inhibitory phosphorylation of the actin binding/depolymerizing factor cofilin. Decreased cofilin activity may lead to stabilization of actin filaments. Phosphorylates LIMK1, a kinase that also inhibits the activity of cofilin. Phosphorylates integrin beta5/ITGB5 and thus regulates cell motility. Phosphorylates ARHGEF2 and activates the downstream target RHOA that plays a role in the regulation of assembly of focal adhesions and actin stress fibers. Stimulates cell survival by phosphorylating the BCL2 antagonist of cell death BAD. Alternatively, inhibits apoptosis by preventing caspase-8 binding to death domain receptors in a kinase independent manner. Plays a role in cell-cycle progression by controlling levels of the cell-cycle regulatory protein CDKN1A and by phosphorylating RAN. Promotes kinase-independent stabilization of RHOU, thereby contributing to focal adhesion disassembly during cell migration. This Homo sapiens (Human) protein is Serine/threonine-protein kinase PAK 4.